The chain runs to 492 residues: Bifunctional protein GlmU (492 aa).

The tract at residues 1 to 241 (MTFRGDTAVV…SALVAGVNDR (241 aa)) is pyrophosphorylase. UDP-N-acetyl-alpha-D-glucosamine is bound by residues 12–15 (LAAG), Lys26, Gln83, and 88–89 (GT). A Mg(2+)-binding site is contributed by Asp114. The UDP-N-acetyl-alpha-D-glucosamine site is built by Gly151, Glu166, Asn181, and Asn239. Residue Asn239 coordinates Mg(2+). The tract at residues 242–262 (VQLAQLGAELNRRIVAAHQMA) is linker. The N-acetyltransferase stretch occupies residues 263-492 (GVTVIDPATT…TPPPDADQTP (230 aa)). UDP-N-acetyl-alpha-D-glucosamine is bound by residues Arg344 and Lys362. The active-site Proton acceptor is the His374. The UDP-N-acetyl-alpha-D-glucosamine site is built by Tyr377 and Asn388. Residues Ala391, 397-398 (NY), and Ala434 contribute to the acetyl-CoA site. Positions 451-492 (GGPQRNIEDWVQQKRPGTPSAEAARKASAEQSTPPPDADQTP) are disordered. Residues 483–492 (TPPPDADQTP) are compositionally biased toward pro residues.

It in the N-terminal section; belongs to the N-acetylglucosamine-1-phosphate uridyltransferase family. This sequence in the C-terminal section; belongs to the transferase hexapeptide repeat family. In terms of assembly, homotrimer. The cofactor is Mg(2+).

The protein resides in the cytoplasm. The catalysed reaction is alpha-D-glucosamine 1-phosphate + acetyl-CoA = N-acetyl-alpha-D-glucosamine 1-phosphate + CoA + H(+). The enzyme catalyses N-acetyl-alpha-D-glucosamine 1-phosphate + UTP + H(+) = UDP-N-acetyl-alpha-D-glucosamine + diphosphate. It participates in nucleotide-sugar biosynthesis; UDP-N-acetyl-alpha-D-glucosamine biosynthesis; N-acetyl-alpha-D-glucosamine 1-phosphate from alpha-D-glucosamine 6-phosphate (route II): step 2/2. It functions in the pathway nucleotide-sugar biosynthesis; UDP-N-acetyl-alpha-D-glucosamine biosynthesis; UDP-N-acetyl-alpha-D-glucosamine from N-acetyl-alpha-D-glucosamine 1-phosphate: step 1/1. The protein operates within bacterial outer membrane biogenesis; LPS lipid A biosynthesis. In terms of biological role, catalyzes the last two sequential reactions in the de novo biosynthetic pathway for UDP-N-acetylglucosamine (UDP-GlcNAc). The C-terminal domain catalyzes the transfer of acetyl group from acetyl coenzyme A to glucosamine-1-phosphate (GlcN-1-P) to produce N-acetylglucosamine-1-phosphate (GlcNAc-1-P), which is converted into UDP-GlcNAc by the transfer of uridine 5-monophosphate (from uridine 5-triphosphate), a reaction catalyzed by the N-terminal domain. This is Bifunctional protein GlmU from Mycobacterium marinum (strain ATCC BAA-535 / M).